The following is a 653-amino-acid chain: Protein fem-1 homolog A (653 aa).

ANK repeat units follow at residues 2 to 31 (DLHTAVYNAARDGKLQLLQKLLSGRSREEL), 40 to 70 (SGGTPLLIAARYGHLDVVEYLVDRCGASVEA), 82 to 111 (EGAPPLWAASAAGHLDVVRSLLRRGASVNR), 115 to 145 (TNSTPLRAACFDGHLEVVRYLVGEHQADLEV), 149 to 178 (HGHTCLMISCYKGHREIARYLLEQGAQVNR), 182 to 211 (KGNTALHDCAESGSLEILQLLLGCNARMER), and 214 to 243 (YGMTPLLAASVTGHTNIVEYLIQEQPAGDE). A Phosphoserine modification is found at S108. A disordered region spans residues 242 to 274 (DEQAQPGLARVQPQGARSSPEEPPSGESYESCC). 2 TPR repeats span residues 282 to 316 (VEALELLGATYVDKKRDLLGALKHWRRAMELRHQG) and 374 to 407 (SYYIRYRGAVYADSGNFERCIRLWKYALDMQQNN). 2 ANK repeats span residues 518–560 (NGFT…DPDS) and 564–593 (DNNTPLHIAAQNNCPGIMNALIEAGAHMDA).

The protein belongs to the fem-1 family. In terms of assembly, component of a CRL2 E3 ubiquitin-protein ligase complex, also named ECS (Elongin BC-CUL2/5-SOCS-box protein) complex, composed of CUL2, Elongin BC (ELOB and ELOC), RBX1 and substrate-specific adapter FEM1A. Interacts with PTGER4. Interacts with NFKB1; the interaction is direct. Phosphorylated; highly phosphorylated in myoblasts and myotubes. Phosphorylation at Ser-108 promotes PGE2-EP4-mediated inhibition of inflammation. Dephosphorylated by protein phosphatase 2A (PP2A).

It localises to the mitochondrion. It is found in the cytoplasm. The protein operates within protein modification; protein ubiquitination. Functionally, substrate-recognition component of a Cul2-RING (CRL2) E3 ubiquitin-protein ligase complex of the DesCEND (destruction via C-end degrons) pathway, which recognizes a C-degron located at the extreme C terminus of target proteins, leading to their ubiquitination and degradation. The C-degron recognized by the DesCEND pathway is usually a motif of less than ten residues and can be present in full-length proteins, truncated proteins or proteolytically cleaved forms. The CRL2(FEM1A) complex specifically recognizes proteins with an arginine at the C-terminus: recognizes and binds proteins ending with -Lys/Arg-Xaa-Arg and -Lys/Arg-Xaa-Xaa-Arg C-degrons, such as SIL1 or OR51B2, leading to their ubiquitination and degradation. Involved in PGE2-EP4-mediated inhibition of inflammation of macrophages via interaction with NFKB1 and PTGER4. Promotes inflammation in brain microglia through MAP2K4/MKK4-mediated signaling. The protein is Protein fem-1 homolog A of Bos taurus (Bovine).